Reading from the N-terminus, the 444-residue chain is Na(+)-translocating NADH-quinone reductase subunit A (444 aa).

The protein belongs to the NqrA family. In terms of assembly, composed of six subunits; NqrA, NqrB, NqrC, NqrD, NqrE and NqrF.

The catalysed reaction is a ubiquinone + n Na(+)(in) + NADH + H(+) = a ubiquinol + n Na(+)(out) + NAD(+). NQR complex catalyzes the reduction of ubiquinone-1 to ubiquinol by two successive reactions, coupled with the transport of Na(+) ions from the cytoplasm to the periplasm. NqrA to NqrE are probably involved in the second step, the conversion of ubisemiquinone to ubiquinol. This is Na(+)-translocating NADH-quinone reductase subunit A from Shewanella amazonensis (strain ATCC BAA-1098 / SB2B).